The primary structure comprises 1076 residues: Protein EXPORTIN 1B (1076 aa).

Residues 37 to 103 (ADNILRDLKA…KNYISDVIVQ (67 aa)) form the Importin N-terminal domain. HEAT repeat units lie at residues 135 to 171 (AKWK…EVFD), 232 to 267 (IFES…LNFG), 282 to 319 (MNQL…FFTS), 475 to 514 (DTEK…SMVV), 564 to 601 (KFLK…KCKR), 613 to 650 (PFVS…AESD), 683 to 720 (LKEP…IFLD), 757 to 794 (REIL…DYAR), 799 to 836 (ARES…CTLE), 895 to 935 (ETGL…VLTD), and 943 to 988 (KLHV…YTTK).

The protein belongs to the exportin family. As to expression, present in mature pollen grains, unpollinated pistils, and 2-week-old seedlings.

It is found in the nucleus. The protein resides in the nuclear pore complex. Its subcellular location is the nucleus membrane. Receptor for the leucine-rich nuclear export signal (NES). Binds cooperatively to the NES on its target protein and to the small GTPase Ran in its active GTP-bound form. Required for the maternal-to-embryonic transition and during gametophyte development. The chain is Protein EXPORTIN 1B from Arabidopsis thaliana (Mouse-ear cress).